We begin with the raw amino-acid sequence, 132 residues long: Small ribosomal subunit protein uS8 (132 aa).

It belongs to the universal ribosomal protein uS8 family. As to quaternary structure, part of the 30S ribosomal subunit. Contacts proteins S5 and S12.

Its function is as follows. One of the primary rRNA binding proteins, it binds directly to 16S rRNA central domain where it helps coordinate assembly of the platform of the 30S subunit. The polypeptide is Small ribosomal subunit protein uS8 (Streptococcus agalactiae serotype Ia (strain ATCC 27591 / A909 / CDC SS700)).